A 152-amino-acid chain; its full sequence is Nucleoside diphosphate kinase (152 aa).

ATP is bound by residues lysine 10, phenylalanine 58, arginine 86, threonine 92, arginine 103, and asparagine 113. Histidine 116 acts as the Pros-phosphohistidine intermediate in catalysis.

Belongs to the NDK family. Mg(2+) is required as a cofactor.

The protein localises to the cytoplasm. The catalysed reaction is a 2'-deoxyribonucleoside 5'-diphosphate + ATP = a 2'-deoxyribonucleoside 5'-triphosphate + ADP. It carries out the reaction a ribonucleoside 5'-diphosphate + ATP = a ribonucleoside 5'-triphosphate + ADP. Its function is as follows. Major role in the synthesis of nucleoside triphosphates other than ATP. The ATP gamma phosphate is transferred to the NDP beta phosphate via a ping-pong mechanism, using a phosphorylated active-site intermediate. This chain is Nucleoside diphosphate kinase, found in Methanosphaera stadtmanae (strain ATCC 43021 / DSM 3091 / JCM 11832 / MCB-3).